We begin with the raw amino-acid sequence, 25 residues long: Mu-conotoxin CnIIIB (25 aa).

At glutamine 1 the chain carries Pyrrolidone carboxylic acid; partial. Disulfide bonds link cysteine 3-cysteine 15, cysteine 4-cysteine 21, and cysteine 10-cysteine 22.

This sequence belongs to the conotoxin M superfamily. As to expression, expressed by the venom duct.

It localises to the secreted. Its function is as follows. Mu-conotoxins block voltage-gated sodium channels (Nav). This synthetic toxin blocks slightly but irreversibly tetrodotoxin-resistant VGSCs. The protein is Mu-conotoxin CnIIIB of Conus consors (Singed cone).